A 263-amino-acid polypeptide reads, in one-letter code: Acetylglutamate kinase (263 aa).

Residues 48-49 (GG), R70, and N162 each bind substrate.

It belongs to the acetylglutamate kinase family. ArgB subfamily.

The protein localises to the cytoplasm. It carries out the reaction N-acetyl-L-glutamate + ATP = N-acetyl-L-glutamyl 5-phosphate + ADP. It functions in the pathway amino-acid biosynthesis; L-arginine biosynthesis; N(2)-acetyl-L-ornithine from L-glutamate: step 2/4. Catalyzes the ATP-dependent phosphorylation of N-acetyl-L-glutamate. The polypeptide is Acetylglutamate kinase (Vibrio vulnificus (strain YJ016)).